Reading from the N-terminus, the 138-residue chain is Acidic phospholipase A2 CoaPLA2 (138 aa).

Residues Met1 to Gly16 form the signal peptide. Disulfide bonds link Cys42–Cys131, Cys44–Cys60, Cys59–Cys111, Cys65–Cys138, Cys66–Cys104, Cys73–Cys97, and Cys91–Cys102. Positions 43, 45, and 47 each coordinate Ca(2+). Residue His63 is part of the active site. Asp64 is a binding site for Ca(2+). The active site involves Asp105.

This sequence belongs to the phospholipase A2 family. Group II subfamily. D49 sub-subfamily. As to quaternary structure, homodimer. Requires Ca(2+) as cofactor. Expressed by the venom gland.

The protein localises to the secreted. It catalyses the reaction a 1,2-diacyl-sn-glycero-3-phosphocholine + H2O = a 1-acyl-sn-glycero-3-phosphocholine + a fatty acid + H(+). Snake venom phospholipase A2 (PLA2) that shows very low inhibition of ADP-induced platelet aggregation in platelet-rich plasma of human, rabbit and guinea pig. Shows edema-inducing activity and myotoxicity. PLA2 catalyzes the calcium-dependent hydrolysis of the 2-acyl groups in 3-sn-phosphoglycerides. This chain is Acidic phospholipase A2 CoaPLA2, found in Crotalus lutosus abyssus (Grand Canyon rattlesnake).